Consider the following 1269-residue polypeptide: Myb-binding protein 1A-like protein (1269 aa).

The disordered stretch occupies residues 708–783; it reads DPNKDEDESG…EEDEAMEEGQ (76 aa). Basic and acidic residues predominate over residues 721–730; sequence TDDKKRKLKE. The segment covering 731–783 has biased composition (acidic residues); that stretch reads EDEDDDDEEEDDDNDEGDDDDDDDDEEEGGEEGEESSDSSDDEEEDEAMEEGQ. Ser810 bears the Phosphoserine mark. The interval 1163-1269 is disordered; sequence VKKVPEAEQT…KKKKKGADGE (107 aa). Over residues 1177-1195 the composition is skewed to basic residues; the sequence is KKKKGFLPETKKRKNRKKP. A compositionally biased stretch (basic and acidic residues) spans 1199–1211; it reads EGKETETPVEKTP. Basic residues-rich tracts occupy residues 1221-1232 and 1256-1269; these read NKNKKKNKKRKQ and KQKK…ADGE.

This sequence belongs to the MYBBP1A family.

The protein resides in the nucleus. The protein localises to the nucleolus. May activate or repress transcription via interactions with sequence specific DNA-binding proteins. May play a role in the repression of the circadian clock gene expression. The sequence is that of Myb-binding protein 1A-like protein (mybbp1a) from Danio rerio (Zebrafish).